Consider the following 383-residue polypeptide: Seipin (383 aa).

The Cytoplasmic segment spans residues 1–27; sequence MVNDPPVPALLWAQEVGHVLAGRARRL. Residues 28–48 traverse the membrane as a helical segment; that stretch reads MLQFGVLFCTILLLLWVSVFL. Residues 49–242 lie on the Lumenal side of the membrane; the sequence is YGSFYYSYMP…TCAFVGVASN (194 aa). Residues Asn88 and Asn242 are each glycosylated (N-linked (GlcNAc...) asparagine). A helical membrane pass occupies residues 243-263; that stretch reads FTFLSVIVLFSYMQWVWGAVW. At 264–383 the chain is on the cytoplasmic side; sequence PRHRFSLQVN…LRQRPTCSSS (120 aa). A disordered region spans residues 279-383; sequence NSHHGAPRRI…LRQRPTCSSS (105 aa). At Ser289 the chain carries Phosphoserine. Positions 292–302 are enriched in polar residues; that stretch reads QPGQESTQQSD. The span at 322 to 332 shows a compositional bias: basic and acidic residues; the sequence is EEEKPEKRPLN. Phosphoserine is present on residues Ser342 and Ser345. The span at 353 to 371 shows a compositional bias: low complexity; it reads TEANPPTSASASALAPETL.

Belongs to the seipin family. In terms of assembly, undecamer (an oligomer having eleven subunits). Oligomerization is important for its function in lipid droplet formation. Interacts with LDAF1 to form an oligomeric complex. Interacts with RAB18. Interacts with ZFYVE1 in a RAB18-dependent manner. As to expression, expressed in the paraventricular nucleus of the hypothalamus (PVN) and brainstem dorsal vagal complex (DVC) in oxytocin and catecholaminergic neurons (at protein level). Highest expression detected in subcutaneous and epididymal white adipose tissue, brown adipose tissue and testis. Also expressed in brain, skeletal muscle and adrenal gland, with lower levels detected in liver, heart, kidney, spleen, lung and small intestine. In brain, detected in piriform cortex, olfactory tubercle, islands of Calleja, lateral septal nucleus, medial septal nucleus, nucleus of the vertical limb of the diagonal band, nucleus of the horizontal limb of the diagonal band, preoptic area, paraventricular thalamic nucleus, lateral globus pallidus, supraoptic nucleus, suprachiasmatic nucleus, subfornical organ, paraventricular nucleus of the hypothalamus, zona incerta, dorsomedial nucleus of the hypothalamus, ventromedial nucleus of the hypothalamus, arcuate nucleus of the hypothalamus, basomedial amygdaloid nucleus, medial amygdaloid nucleus, medial habenular, pyramidal cell layer of the hippocampus, granular layer of the dentate gyrus, posterior hypothalamus, supramammilliary nucleus, premammillary nucleus, nucleus of Darkschewitsch, Edinger-Westphal nucleus, ventral tegmental area, dorsal raphe nucleus, periaqueductal gray, median raphe nucleus, lateral parabrachial nucleus, dorsal tegmental nucleus, laterodorsal tegmental nucleus, locus coeruleus, Barrington's nucleus, medial vestibular nucleus, ambiguous nucleus, dorsal vagal complex and hypoglossal nucleus.

It localises to the endoplasmic reticulum membrane. The protein resides in the lipid droplet. In terms of biological role, plays a crucial role in the formation of lipid droplets (LDs) which are storage organelles at the center of lipid and energy homeostasis. In association with LDAF1, defines the sites of LD formation in the ER. Also required for growth and maturation of small nascent LDs into larger mature LDs. Mediates the formation and/or stabilization of endoplasmic reticulum-lipid droplets (ER-LD) contacts, facilitating protein and lipid delivery from the ER into growing LDs. Regulates the maturation of ZFYVE1-positive nascent LDs and the function of the RAB18-ZFYVE1 complex in mediating the formation of ER-LD contacts. Binds anionic phospholipids including phosphatidic acid. Plays an important role in the differentiation and development of adipocytes. This is Seipin from Mus musculus (Mouse).